We begin with the raw amino-acid sequence, 221 residues long: Interleukin-12 subunit alpha (221 aa).

Residues 1–25 (MCPLRSLLLISTLVLLHHLPHLSLG) form the signal peptide. Cystine bridges form between Cys-39–Cys-112, Cys-66–Cys-198, and Cys-87–Cys-125. N-linked (GlcNAc...) asparagine glycosylation is present at Asn-95.

The protein belongs to the IL-6 superfamily. In terms of assembly, heterodimer with IL12B; disulfide-linked. This heterodimer is known as interleukin IL-12. Heterodimer with EBI3/IL27B; not disulfide-linked. This heterodimer is known as interleukin IL-35. Interacts with NBR1; this interaction promotes IL-12 secretion.

Its subcellular location is the secreted. In terms of biological role, heterodimerizes with IL12B to form the IL-12 cytokine or with EBI3/IL27B to form the IL-35 cytokine. IL-12 is primarily produced by professional antigen-presenting cells (APCs) such as B-cells and dendritic cells (DCs) as well as macrophages and granulocytes and regulates T-cell and natural killer-cell responses, induces the production of interferon-gamma (IFN-gamma), favors the differentiation of T-helper 1 (Th1) cells and is an important link between innate resistance and adaptive immunity. Mechanistically, exerts its biological effects through a receptor composed of IL12R1 and IL12R2 subunits. Binding to the receptor results in the rapid tyrosine phosphorylation of a number of cellular substrates including the JAK family kinases TYK2 and JAK2. In turn, recruited STAT4 gets phosphorylated and translocates to the nucleus where it regulates cytokine/growth factor responsive genes. As part of IL-35, plays essential roles in maintaining the immune homeostasis of the liver microenvironment and also functions as an immune-suppressive cytokine. Mediates biological events through unconventional receptors composed of IL12RB2 and gp130/IL6ST heterodimers or homodimers. Signaling requires the transcription factors STAT1 and STAT4, which form a unique heterodimer that binds to distinct DNA sites. This is Interleukin-12 subunit alpha (IL12A) from Ovis aries (Sheep).